The chain runs to 112 residues: Large ribosomal subunit protein bL17 (112 aa).

This sequence belongs to the bacterial ribosomal protein bL17 family. As to quaternary structure, part of the 50S ribosomal subunit. Contacts protein L32.

The protein is Large ribosomal subunit protein bL17 of Moorella thermoacetica (strain ATCC 39073 / JCM 9320).